Here is a 118-residue protein sequence, read N- to C-terminus: Small ribosomal subunit protein uS13 (118 aa).

Positions 93 to 118 (RSLPVRGQRSKTNARTRKGPRKPIKK) are disordered.

The protein belongs to the universal ribosomal protein uS13 family. In terms of assembly, part of the 30S ribosomal subunit. Forms a loose heterodimer with protein S19. Forms two bridges to the 50S subunit in the 70S ribosome.

In terms of biological role, located at the top of the head of the 30S subunit, it contacts several helices of the 16S rRNA. In the 70S ribosome it contacts the 23S rRNA (bridge B1a) and protein L5 of the 50S subunit (bridge B1b), connecting the 2 subunits; these bridges are implicated in subunit movement. Contacts the tRNAs in the A and P-sites. This Teredinibacter turnerae (strain ATCC 39867 / T7901) protein is Small ribosomal subunit protein uS13.